Reading from the N-terminus, the 115-residue chain is Large ribosomal subunit protein uL22 (115 aa).

This sequence belongs to the universal ribosomal protein uL22 family. In terms of assembly, part of the 50S ribosomal subunit.

In terms of biological role, this protein binds specifically to 23S rRNA; its binding is stimulated by other ribosomal proteins, e.g. L4, L17, and L20. It is important during the early stages of 50S assembly. It makes multiple contacts with different domains of the 23S rRNA in the assembled 50S subunit and ribosome. Its function is as follows. The globular domain of the protein is located near the polypeptide exit tunnel on the outside of the subunit, while an extended beta-hairpin is found that lines the wall of the exit tunnel in the center of the 70S ribosome. The protein is Large ribosomal subunit protein uL22 of Endomicrobium trichonymphae.